The chain runs to 282 residues: Pantothenate synthetase (282 aa).

26 to 33 provides a ligand contact to ATP; that stretch reads MGNLHDGH. Catalysis depends on histidine 33, which acts as the Proton donor. Glutamine 57 is a binding site for (R)-pantoate. Glutamine 57 contacts beta-alanine. 148 to 151 is an ATP binding site; it reads GKKD. Glutamine 154 lines the (R)-pantoate pocket. An ATP-binding site is contributed by 185–188; that stretch reads LSSR.

It belongs to the pantothenate synthetase family. As to quaternary structure, homodimer.

It localises to the cytoplasm. The enzyme catalyses (R)-pantoate + beta-alanine + ATP = (R)-pantothenate + AMP + diphosphate + H(+). Its pathway is cofactor biosynthesis; (R)-pantothenate biosynthesis; (R)-pantothenate from (R)-pantoate and beta-alanine: step 1/1. Its function is as follows. Catalyzes the condensation of pantoate with beta-alanine in an ATP-dependent reaction via a pantoyl-adenylate intermediate. The protein is Pantothenate synthetase of Polaromonas sp. (strain JS666 / ATCC BAA-500).